Here is a 345-residue protein sequence, read N- to C-terminus: Beta-ketoacyl-[acyl-carrier-protein] synthase III (345 aa).

Catalysis depends on residues cysteine 114 and histidine 272. The interval 273–277 (QANQR) is ACP-binding. Residue asparagine 302 is part of the active site.

Belongs to the thiolase-like superfamily. FabH family. Homodimer.

It is found in the cytoplasm. The enzyme catalyses malonyl-[ACP] + acetyl-CoA + H(+) = 3-oxobutanoyl-[ACP] + CO2 + CoA. The protein operates within lipid metabolism; fatty acid biosynthesis. Its function is as follows. Catalyzes the condensation reaction of fatty acid synthesis by the addition to an acyl acceptor of two carbons from malonyl-ACP. Catalyzes the first condensation reaction which initiates fatty acid synthesis and may therefore play a role in governing the total rate of fatty acid production. Possesses both acetoacetyl-ACP synthase and acetyl transacylase activities. Its substrate specificity determines the biosynthesis of branched-chain and/or straight-chain of fatty acids. This is Beta-ketoacyl-[acyl-carrier-protein] synthase III from Rhodopirellula baltica (strain DSM 10527 / NCIMB 13988 / SH1).